The primary structure comprises 984 residues: E3 ubiquitin-protein ligase BRE1A (984 aa).

The interval 1–34 is disordered; sequence MSGAGNKRAAGEPGPSAPPEKKAGVEDSGTTVET. Residues 43–90 are a coiled coil; that stretch reads TEELDIRTLQTKNRKLAEMLDQRQAIEDELREHIEKLERRQATDDASL. A disordered region spans residues 128–150; the sequence is VVPEPEPDSDSNQERKDERERGE. Basic and acidic residues predominate over residues 139 to 150; that stretch reads NQERKDERERGE. Coiled-coil stretches lie at residues 236–378 and 429–907; these read ADTL…VKET and SLHK…TTKK. Residues 506–632 form a disordered region; it reads SDLSKIRSRS…KHEDGRKKEA (127 aa). Residues 514–526 are compositionally biased toward polar residues; that stretch reads RSGSALLQSQSST. Basic and acidic residues-rich tracts occupy residues 527–540 and 558–632; these read EDTKEEPPEIKQEP and SEVK…KKEA. An RING-type zinc finger spans residues 931-970; that stretch reads CPCCNMRKKDAVLTKCFHVFCFECVKTRYDTRQRKCPKCN.

It belongs to the BRE1 family. In terms of assembly, component of the RNF20/40 complex (also known as BRE1 complex).

It localises to the nucleus. The catalysed reaction is S-ubiquitinyl-[E2 ubiquitin-conjugating enzyme]-L-cysteine + [acceptor protein]-L-lysine = [E2 ubiquitin-conjugating enzyme]-L-cysteine + N(6)-ubiquitinyl-[acceptor protein]-L-lysine.. The protein operates within protein modification; protein ubiquitination. Its function is as follows. Component of the RNF20/40 E3 ubiquitin-protein ligase complex that mediates monoubiquitination of 'Lys-120' of histone H2B (H2BK120ub1). H2BK120ub1 gives a specific tag for epigenetic transcriptional activation and is also prerequisite for histone H3 'Lys-4' and 'Lys-79' methylation (H3K4me and H3K79me, respectively). In Gallus gallus (Chicken), this protein is E3 ubiquitin-protein ligase BRE1A (RNF20).